A 345-amino-acid chain; its full sequence is MAAADPFLHLARPLGPVAVGSAPTTAPLNVVIQPQALFSILDHSLRRNADQERVIGTLLGTRSEDGTEVEIRSTFAVGHTETTDQVEVDMEYQKQMLALHLKANPKEVLVGWYATSSELNTFSALIQNFYSGQGDGTFPHPAVHLTVSTEPGKDIETRAYISAPVGVTAERAADSAAFIPVPHEIRYGETEKSGLEAIAAARDAEERAANLFTDIEALERAIEEVLGMIDRVSRYVESVIDEEAPASTALGQFLLNALALAPKVEPADIERDFNNHIQDVLVVSYLANTIRTQMELSNRLATAQLTLGGESGSTESGQRGGQRGGKGGRGGQQRNQERSGEEVRA.

The region spanning 30 to 166 (VVIQPQALFS…TRAYISAPVG (137 aa)) is the MPN domain. The segment at 308-345 (GGESGSTESGQRGGQRGGKGGRGGQQRNQERSGEEVRA) is disordered. Residues 318 to 331 (QRGGQRGGKGGRGG) show a composition bias toward gly residues. A compositionally biased stretch (basic and acidic residues) spans 335–345 (NQERSGEEVRA).

This sequence belongs to the eIF-3 subunit F family. As to quaternary structure, component of the eukaryotic translation initiation factor 3 (eIF-3) complex.

Its subcellular location is the cytoplasm. Functionally, component of the eukaryotic translation initiation factor 3 (eIF-3) complex, which is involved in protein synthesis of a specialized repertoire of mRNAs and, together with other initiation factors, stimulates binding of mRNA and methionyl-tRNAi to the 40S ribosome. The eIF-3 complex specifically targets and initiates translation of a subset of mRNAs involved in cell proliferation. In Aspergillus terreus (strain NIH 2624 / FGSC A1156), this protein is Eukaryotic translation initiation factor 3 subunit F.